Here is a 100-residue protein sequence, read N- to C-terminus: Urease subunit gamma (100 aa).

The protein belongs to the urease gamma subunit family. In terms of assembly, heterotrimer of UreA (gamma), UreB (beta) and UreC (alpha) subunits. Three heterotrimers associate to form the active enzyme.

It localises to the cytoplasm. The catalysed reaction is urea + 2 H2O + H(+) = hydrogencarbonate + 2 NH4(+). It participates in nitrogen metabolism; urea degradation; CO(2) and NH(3) from urea (urease route): step 1/1. The sequence is that of Urease subunit gamma from Enterobacter sp. (strain 638).